A 592-amino-acid chain; its full sequence is Alanine aminotransferase, mitochondrial (592 aa).

A mitochondrion-targeting transit peptide spans 1–64 (MLSLSAKNHF…RKVRPVLQRH (64 aa)). Ser-77 is modified (phosphoserine). 5 residues coordinate pyridoxal 5'-phosphate: Ala-258, Ser-259, Tyr-284, Asn-340, and Ser-409. Lys-412 is modified (N6-(pyridoxal phosphate)lysine). Arg-421 contacts pyridoxal 5'-phosphate.

This sequence belongs to the class-I pyridoxal-phosphate-dependent aminotransferase family. Alanine aminotransferase subfamily. As to quaternary structure, homodimer. Pyridoxal 5'-phosphate is required as a cofactor.

The protein localises to the mitochondrion matrix. It carries out the reaction L-alanine + 2-oxoglutarate = pyruvate + L-glutamate. It participates in amino-acid degradation; L-alanine degradation via transaminase pathway; pyruvate from L-alanine: step 1/1. Its function is as follows. Alanine aminotransferase involved in both alanine biosynthesis and utilization. Under respiratory conditions, constitutes the sole pathway for alanine biosynthesis and catabolism. Under fermentative conditions, it plays a catabolic role and alanine is mainly synthesized through an alternative pathway. The sequence is that of Alanine aminotransferase, mitochondrial (ALT1) from Saccharomyces cerevisiae (strain ATCC 204508 / S288c) (Baker's yeast).